The sequence spans 483 residues: ATP synthase subunit beta (483 aa).

G169–T176 contacts ATP.

Belongs to the ATPase alpha/beta chains family. As to quaternary structure, F-type ATPases have 2 components, CF(1) - the catalytic core - and CF(0) - the membrane proton channel. CF(1) has five subunits: alpha(3), beta(3), gamma(1), delta(1), epsilon(1). CF(0) has three main subunits: a(1), b(2) and c(9-12). The alpha and beta chains form an alternating ring which encloses part of the gamma chain. CF(1) is attached to CF(0) by a central stalk formed by the gamma and epsilon chains, while a peripheral stalk is formed by the delta and b chains.

The protein localises to the cell membrane. It catalyses the reaction ATP + H2O + 4 H(+)(in) = ADP + phosphate + 5 H(+)(out). In terms of biological role, produces ATP from ADP in the presence of a proton gradient across the membrane. The catalytic sites are hosted primarily by the beta subunits. The chain is ATP synthase subunit beta from Rhodococcus opacus (strain B4).